A 618-amino-acid chain; its full sequence is Glutathione-regulated potassium-efflux system protein (618 aa).

12 helical membrane-spanning segments follow: residues 6–26, 32–52, 55–75, 94–114, 118–138, 152–172, 186–206, 227–247, 274–294, 298–318, 336–356, and 362–382; these read NPELMKVVILLASSVTIVPLF, GSVLGYLVAGCLIGPSVFGIV, PTAVVHLAELGVVMFLFIIGL, LLQVGLCGCLLTFSGIYLLGL, VSFIAGMGFTLSSTAIVMQSL, VISTLIFEDIAIVPLLASVAF, WVSIGIALSAVVGLIVTGKWL, ALLVVLGAALAMEIGGLSMAM, GLLLGLFFMGVGMSLDLHLVF, ILLLGIVFLYILGKASAVYII, MAHGGEFAFVLFSAAATAEVI, and ATFTAAVIISMLFSPIIAQIA. In terms of domain architecture, RCK N-terminal spans 409-525; that stretch reads EDNVLVIGFG…LIKQDVDFIV (117 aa).

This sequence belongs to the monovalent cation:proton antiporter 2 (CPA2) transporter (TC 2.A.37) family.

It localises to the cell inner membrane. In terms of biological role, transport system that facilitate potassium-efflux, possibly by potassium-proton antiport. The sequence is that of Glutathione-regulated potassium-efflux system protein (kefBC) from Haemophilus influenzae (strain ATCC 51907 / DSM 11121 / KW20 / Rd).